The primary structure comprises 438 residues: Succinyl-CoA:glutarate CoA-transferase (438 aa).

Residues 1-31 (MLATLARVAALRRTCLFSGRGGGRGLWTGRP) constitute a mitochondrion transit peptide. The active-site Nucleophile is aspartate 205. Lysine 394 is modified (N6-acetyllysine).

This sequence belongs to the CoA-transferase III family. In terms of tissue distribution, highly expressed in kidney. Intermediate expression in liver, skeletal muscle and pancreas. Little to no expression detected in other tissues examined.

The protein localises to the mitochondrion. It carries out the reaction glutarate + succinyl-CoA = glutaryl-CoA + succinate. It catalyses the reaction 3-hydroxy-3-methylglutarate + succinyl-CoA = (3S)-3-hydroxy-3-methylglutaryl-CoA + succinate. The catalysed reaction is 3-hydroxy-3-methylglutarate + glutaryl-CoA = (3S)-3-hydroxy-3-methylglutaryl-CoA + glutarate. The enzyme catalyses hexanedioate + glutaryl-CoA = hexanedioyl-CoA + glutarate. It carries out the reaction itaconate + glutaryl-CoA = itaconyl-CoA + glutarate. It catalyses the reaction itaconate + succinyl-CoA = itaconyl-CoA + succinate. Its activity is regulated as follows. Inhibited by valsartan and losartan carboxylate. Coenzyme A (CoA) transferase that reversibly catalyzes the transfer of a CoA moiety from a dicarboxyl-CoA to a dicarboxylate in a metabolite recycling process. Displays preference for succinyl-CoA and glutarate-CoA as dicarboxyl-CoA donors and glutarate, succinate, adipate/hexanedioate, itaconate and 3-hydroxy-3-methylglutarate as dicarboxylate acceptors. Acts on intermediates or end products of lysine and tryptophan degradation pathway, in particular catalyzes succinyl-CoA-dependent reesterification of free glutarate into glutaryl-CoA to prevent renal excretion of glutarate. Upon inflammation, may convert macrophage-derived itaconate to itaconyl-CoA in erythroid precursors where it negatively regulates the TCA cycle and heme synthesis to limit erythroid differentiation in the context of stress erythropoiesis. In Homo sapiens (Human), this protein is Succinyl-CoA:glutarate CoA-transferase.